Consider the following 307-residue polypeptide: MAIEKKFVNDGYVKASMDEYFAEQLNRAGYGGMELNRTPMGTQIIIYSEKPGMVIGKAGKVIRKLTRDVATKYNLENPQIDAQEVKKPELNAQMMASRLAASIERGWYFRKAGHNTIRAVMNAGALGCEVVISGKLTGARSRVEKFVDGYIKHSGHPVEEVVDEGFAVAIKKLGTLGCKVRIIQPGVVLPDSYKVRESVEIEEPAEKPAEKQVEKPAVAPKKEAAKAKAPAPAAAPEPAPTEEPEVAEPEEAEEAQVEASEDFEEAELIYVEGSEEVRRQVNGVWQHKHESYDYWHPMARVHKEAKE.

A KH type-2 domain is found at 17–86 (MDEYFAEQLN…NPQIDAQEVK (70 aa)). Over residues 201–226 (IEEPAEKPAEKQVEKPAVAPKKEAAK) the composition is skewed to basic and acidic residues. The interval 201-265 (IEEPAEKPAE…QVEASEDFEE (65 aa)) is disordered. Residues 240–265 (PTEEPEVAEPEEAEEAQVEASEDFEE) are compositionally biased toward acidic residues.

It belongs to the universal ribosomal protein uS3 family. As to quaternary structure, part of the 30S ribosomal subunit.

Functionally, binds the lower part of the 30S subunit head. In Methanosarcina mazei (strain ATCC BAA-159 / DSM 3647 / Goe1 / Go1 / JCM 11833 / OCM 88) (Methanosarcina frisia), this protein is Small ribosomal subunit protein uS3.